The sequence spans 295 residues: uncharacterized protein (295 aa).

An N-terminal signal peptide occupies residues 1–19 (MHKLLLIITVFFTFNVAQA).

This is an uncharacterized protein from Rickettsia prowazekii (strain Madrid E).